Consider the following 660-residue polypeptide: Acetyl-coenzyme A synthetase (660 aa).

Residues Arg-197–Lys-200 and Thr-317 contribute to the CoA site. ATP-binding positions include Gly-397–Pro-399, Asp-421–Thr-426, Asp-512, and Arg-528. Ser-536 contacts CoA. Residue Arg-539 coordinates ATP. Mg(2+) is bound by residues Val-550 and Val-555. Position 625 is an N6-acetyllysine (Lys-625).

The protein belongs to the ATP-dependent AMP-binding enzyme family. It depends on Mg(2+) as a cofactor. In terms of processing, acetylated. Deacetylation by the SIR2-homolog deacetylase activates the enzyme.

The catalysed reaction is acetate + ATP + CoA = acetyl-CoA + AMP + diphosphate. Functionally, catalyzes the conversion of acetate into acetyl-CoA (AcCoA), an essential intermediate at the junction of anabolic and catabolic pathways. AcsA undergoes a two-step reaction. In the first half reaction, AcsA combines acetate with ATP to form acetyl-adenylate (AcAMP) intermediate. In the second half reaction, it can then transfer the acetyl group from AcAMP to the sulfhydryl group of CoA, forming the product AcCoA. This is Acetyl-coenzyme A synthetase from Cupriavidus metallidurans (strain ATCC 43123 / DSM 2839 / NBRC 102507 / CH34) (Ralstonia metallidurans).